The chain runs to 156 residues: Endoribonuclease YbeY (156 aa).

Zn(2+) is bound by residues His117, His121, and His127.

This sequence belongs to the endoribonuclease YbeY family. It depends on Zn(2+) as a cofactor.

It is found in the cytoplasm. Single strand-specific metallo-endoribonuclease involved in late-stage 70S ribosome quality control and in maturation of the 3' terminus of the 16S rRNA. The sequence is that of Endoribonuclease YbeY from Shewanella piezotolerans (strain WP3 / JCM 13877).